A 163-amino-acid chain; its full sequence is MALNLQDKQAIVAEVNEAAKGALSAVVADSRGVTVEKMTELRKAAREAGVSMRVVRNTLLRRAVEGTEFECLKDTFTGPTLIAFSNEHPGAAARLFKDFAKANKEFEVKGAAFEGKIQDVEFLATLPTYEEAIARLMGTMKEAAAGKLVRTLAALRDKLQEAA.

The protein belongs to the universal ribosomal protein uL10 family. Part of the ribosomal stalk of the 50S ribosomal subunit. The N-terminus interacts with L11 and the large rRNA to form the base of the stalk. The C-terminus forms an elongated spine to which L12 dimers bind in a sequential fashion forming a multimeric L10(L12)X complex.

Its function is as follows. Forms part of the ribosomal stalk, playing a central role in the interaction of the ribosome with GTP-bound translation factors. This chain is Large ribosomal subunit protein uL10, found in Glaesserella parasuis serovar 5 (strain SH0165) (Haemophilus parasuis).